The primary structure comprises 590 residues: Kinetochore protein ndc-80 (590 aa).

Coiled-coil stretches lie at residues 269 to 342 (KGNE…KQIH) and 450 to 525 (ELET…MKLD).

This sequence belongs to the NDC80/HEC1 family. As to quaternary structure, component of the NDC80 complex, which is composed of at least ndc-80 and him-10. The NDC80 complex interacts with knl-1. Interacts with the RZZ complex components rod-1 (via N-terminus) and zwl-1.

The protein resides in the nucleus. The protein localises to the chromosome. Its subcellular location is the centromere. It localises to the kinetochore. It is found in the cytoplasm. The protein resides in the cytoskeleton. Its function is as follows. Acts as a component of the essential kinetochore-associated ndc-80 complex, which is required for chromosome segregation in mitosis and meiosis and spindle checkpoint activity. Plays a role in kinetochore assembly and recruits the checkpoint protein mdf-2 and the spindly-like protein spdl-1 to unattached kinetochores. Mediates the formation of end-on kinetochore-microtubule attachments through recruitment of spdl-1. The ndc-80 complex synergistically enhances the affinity of the ska-1 complex for microtubules and may allow the ndc-80 complex to track depolymerizing microtubules. This Caenorhabditis elegans protein is Kinetochore protein ndc-80 (ndc-80).